A 191-amino-acid chain; its full sequence is Glycerol-3-phosphate acyltransferase (191 aa).

A run of 5 helical transmembrane segments spans residues 3–23 (YLIV…FILT), 51–71 (TLGY…VLYV), 78–98 (YIFI…WLKF), 108–128 (VGIL…SWAV), and 150–170 (YLIV…VLIF).

It belongs to the PlsY family. In terms of assembly, probably interacts with PlsX.

Its subcellular location is the cell inner membrane. It catalyses the reaction an acyl phosphate + sn-glycerol 3-phosphate = a 1-acyl-sn-glycero-3-phosphate + phosphate. Its pathway is lipid metabolism; phospholipid metabolism. Catalyzes the transfer of an acyl group from acyl-phosphate (acyl-PO(4)) to glycerol-3-phosphate (G3P) to form lysophosphatidic acid (LPA). This enzyme utilizes acyl-phosphate as fatty acyl donor, but not acyl-CoA or acyl-ACP. This chain is Glycerol-3-phosphate acyltransferase, found in Pelagibacter ubique (strain HTCC1062).